Here is a 507-residue protein sequence, read N- to C-terminus: Transposase for insertion sequences IS1326/IS1353 (507 aa).

An HTH IS21-type domain is found at 6 to 68; the sequence is ILSAIRRWHF…PFEPKLRQWL (63 aa). Residues 19–40 constitute a DNA-binding region (H-T-H motif); that stretch reads ASIREIARRSGLSRNTVRKYLQ. The Integrase catalytic domain maps to 122-302; sequence GCFIPLRFAC…TVQEAFADEQ (181 aa).

It belongs to the transposase IS21/IS408/IS1162 family.

Required for the transposition of the insertion element. This chain is Transposase for insertion sequences IS1326/IS1353 (istA), found in Pseudomonas aeruginosa.